The chain runs to 358 residues: Peptide chain release factor 1 (358 aa).

Position 233 is an N5-methylglutamine (Gln233).

This sequence belongs to the prokaryotic/mitochondrial release factor family. Methylated by PrmC. Methylation increases the termination efficiency of RF1.

The protein localises to the cytoplasm. In terms of biological role, peptide chain release factor 1 directs the termination of translation in response to the peptide chain termination codons UAG and UAA. This is Peptide chain release factor 1 from Staphylococcus haemolyticus (strain JCSC1435).